Consider the following 439-residue polypeptide: Trigger factor (439 aa).

Residues 162-247 (GDRLTLDFIG…LKKVEAMILP (86 aa)) enclose the PPIase FKBP-type domain.

The protein belongs to the FKBP-type PPIase family. Tig subfamily.

The protein localises to the cytoplasm. The catalysed reaction is [protein]-peptidylproline (omega=180) = [protein]-peptidylproline (omega=0). Its function is as follows. Involved in protein export. Acts as a chaperone by maintaining the newly synthesized protein in an open conformation. Functions as a peptidyl-prolyl cis-trans isomerase. In Dichelobacter nodosus (strain VCS1703A), this protein is Trigger factor.